A 315-amino-acid chain; its full sequence is Mitochondrial glutamate carrier 2 (315 aa).

Solcar repeat units lie at residues 6-92 (LSIT…FRRL), 100-210 (RNLK…LNNL), and 219-308 (ASFA…GIGE). The next 3 membrane-spanning stretches (helical) occupy residues 12-32 (LING…IDLA), 61-81 (FFGM…EKAI), and 106-126 (MLAG…MEML). Residues 141 to 160 (QGSASAPSTSRSYTTGSAST) are disordered. Over residues 142–159 (GSASAPSTSRSYTTGSAS) the composition is skewed to polar residues. Ser-145 carries the phosphoserine modification. Transmembrane regions (helical) follow at residues 185 to 205 (GLGA…PLFA), 225 to 245 (FVSG…LDVL), and 288 to 308 (ALVI…GIGE).

This sequence belongs to the mitochondrial carrier (TC 2.A.29) family. In terms of tissue distribution, expressed in brain, to a lesser extent in testis, and poorly in all the other tissues.

It is found in the mitochondrion inner membrane. It carries out the reaction L-glutamate(in) + H(+)(in) = L-glutamate(out) + H(+)(out). In terms of biological role, responsible for the transport of glutamate from the cytosol into the mitochondrial matrix with the concomitant import of a proton (symport system). The chain is Mitochondrial glutamate carrier 2 from Homo sapiens (Human).